We begin with the raw amino-acid sequence, 264 residues long: Thymidylate synthase (264 aa).

DUMP is bound at residue Arg-21. His-51 is a (6R)-5,10-methylene-5,6,7,8-tetrahydrofolate binding site. Residue 126–127 coordinates dUMP; that stretch reads RR. Residue Cys-146 is the Nucleophile of the active site. DUMP is bound by residues 166-169, Asn-177, and 207-209; these read RSAD and HIY. Asp-169 provides a ligand contact to (6R)-5,10-methylene-5,6,7,8-tetrahydrofolate. Ala-263 is a (6R)-5,10-methylene-5,6,7,8-tetrahydrofolate binding site.

This sequence belongs to the thymidylate synthase family. Bacterial-type ThyA subfamily. Homodimer.

The protein resides in the cytoplasm. It carries out the reaction dUMP + (6R)-5,10-methylene-5,6,7,8-tetrahydrofolate = 7,8-dihydrofolate + dTMP. It functions in the pathway pyrimidine metabolism; dTTP biosynthesis. Functionally, catalyzes the reductive methylation of 2'-deoxyuridine-5'-monophosphate (dUMP) to 2'-deoxythymidine-5'-monophosphate (dTMP) while utilizing 5,10-methylenetetrahydrofolate (mTHF) as the methyl donor and reductant in the reaction, yielding dihydrofolate (DHF) as a by-product. This enzymatic reaction provides an intracellular de novo source of dTMP, an essential precursor for DNA biosynthesis. This chain is Thymidylate synthase, found in Methylobacillus flagellatus (strain ATCC 51484 / DSM 6875 / VKM B-1610 / KT).